The primary structure comprises 170 residues: Endoribonuclease YbeY (170 aa).

Residues H128, H132, and H138 each contribute to the Zn(2+) site.

It belongs to the endoribonuclease YbeY family. Requires Zn(2+) as cofactor.

The protein resides in the cytoplasm. Single strand-specific metallo-endoribonuclease involved in late-stage 70S ribosome quality control and in maturation of the 3' terminus of the 16S rRNA. The polypeptide is Endoribonuclease YbeY (Ruegeria sp. (strain TM1040) (Silicibacter sp.)).